A 318-amino-acid chain; its full sequence is Methionyl-tRNA formyltransferase (318 aa).

Residue 110–113 (SLLP) participates in (6S)-5,6,7,8-tetrahydrofolate binding.

This sequence belongs to the Fmt family.

The enzyme catalyses L-methionyl-tRNA(fMet) + (6R)-10-formyltetrahydrofolate = N-formyl-L-methionyl-tRNA(fMet) + (6S)-5,6,7,8-tetrahydrofolate + H(+). In terms of biological role, attaches a formyl group to the free amino group of methionyl-tRNA(fMet). The formyl group appears to play a dual role in the initiator identity of N-formylmethionyl-tRNA by promoting its recognition by IF2 and preventing the misappropriation of this tRNA by the elongation apparatus. The sequence is that of Methionyl-tRNA formyltransferase from Latilactobacillus sakei subsp. sakei (strain 23K) (Lactobacillus sakei subsp. sakei).